Here is an 82-residue protein sequence, read N- to C-terminus: MTELTINHTLDTLGLRCPEPVMLTRKTIRNMADGEVLLIIADDPATTRDIPSFCQFMDHQLLKSQTDTKPYQYWVKKGLDHL.

Cysteine 17 functions as the Cysteine persulfide intermediate in the catalytic mechanism.

Belongs to the sulfur carrier protein TusA family.

The protein resides in the cytoplasm. Its function is as follows. Sulfur carrier protein which probably makes part of a sulfur-relay system. The polypeptide is Sulfur carrier protein TusA (Glaesserella parasuis serovar 5 (strain SH0165) (Haemophilus parasuis)).